The chain runs to 190 residues: Ribosome maturation factor RimM (190 aa).

The PRC barrel domain maps to 102–190; it reads EDEYYWIDLV…RIDSDWPLED (89 aa).

It belongs to the RimM family. Binds ribosomal protein uS19.

Its subcellular location is the cytoplasm. An accessory protein needed during the final step in the assembly of 30S ribosomal subunit, possibly for assembly of the head region. Essential for efficient processing of 16S rRNA. May be needed both before and after RbfA during the maturation of 16S rRNA. It has affinity for free ribosomal 30S subunits but not for 70S ribosomes. The polypeptide is Ribosome maturation factor RimM (Bordetella avium (strain 197N)).